The primary structure comprises 216 residues: Transmembrane emp24 domain-containing protein p24delta5 (216 aa).

The first 27 residues, 1–27 (MAINRIAHGSLFLTVVLFFLTVNYGEA), serve as a signal peptide directing secretion. Residues 28 to 183 (IWLTIPTTGG…REVSETTNSR (156 aa)) lie on the Lumenal side of the membrane. The region spanning 38–151 (TKCVSEEIQS…IEGVELQLRR (114 aa)) is the GOLD domain. Asn86 carries an N-linked (GlcNAc...) asparagine glycan. The stretch at 137–159 (AKKEKIEGVELQLRRLEGLVLSI) forms a coiled coil. Omega-N-methylated arginine occurs at positions 169 and 174. Residues 184–204 (VAWFSIMSLGVCVVVVGSQIL) form a helical membrane-spanning segment. The Cytoplasmic portion of the chain corresponds to 205–216 (YLKRYFHKKKLI). The COPII vesicle coat-binding signature appears at 209–210 (YF). Residues 209–216 (YFHKKKLI) carry the COPI vesicle coat-binding motif.

It belongs to the EMP24/GP25L family. Probably oligomerizes with other members of the EMP24/GP25L family. Associates with the COPI vesicle coat (coatomer). Associates with the COPII vesicle coat (coatomer). Interacts with p24beta2.

Its subcellular location is the endoplasmic reticulum membrane. In terms of biological role, involved in vesicular protein trafficking. Mainly functions in the early secretory pathway. Thought to act as cargo receptor at the lumenal side for incorporation of secretory cargo molecules into transport vesicles and to be involved in vesicle coat formation at the cytoplasmic side. Interacts with p24beta2 at endoplasmic reticulum export sites for endoplasmic reticulum exit and coupled transport to the Golgi apparatus. Once in the Golgi, interacts very efficiently with the COPI machinery for retrograde transport back to the endoplasmic reticulum. This chain is Transmembrane emp24 domain-containing protein p24delta5, found in Arabidopsis thaliana (Mouse-ear cress).